Here is a 242-residue protein sequence, read N- to C-terminus: Ras-like protein family member 11A (242 aa).

Positions 17-241 (ESSSDYLLPK…SSKAKAASTL (225 aa)) are small GTPase-like. GTP is bound by residues 34–41 (GASCVGKS), 81–85 (DTPGG), and 147–150 (NKGD).

This sequence belongs to the small GTPase superfamily. Ras family. In terms of assembly, interacts with UBF/UBTF.

It localises to the nucleus. It is found in the nucleolus. The catalysed reaction is GTP + H2O = GDP + phosphate + H(+). In terms of biological role, regulator of rDNA transcription. Acts in cooperation UBF/UBTF and positively regulates RNA polymerase I transcription. In Rattus norvegicus (Rat), this protein is Ras-like protein family member 11A.